Reading from the N-terminus, the 221-residue chain is Probable transaldolase (221 aa).

Residue Lys83 is the Schiff-base intermediate with substrate of the active site.

This sequence belongs to the transaldolase family. Type 3B subfamily.

Its subcellular location is the cytoplasm. The enzyme catalyses D-sedoheptulose 7-phosphate + D-glyceraldehyde 3-phosphate = D-erythrose 4-phosphate + beta-D-fructose 6-phosphate. It participates in carbohydrate degradation; pentose phosphate pathway; D-glyceraldehyde 3-phosphate and beta-D-fructose 6-phosphate from D-ribose 5-phosphate and D-xylulose 5-phosphate (non-oxidative stage): step 2/3. Functionally, transaldolase is important for the balance of metabolites in the pentose-phosphate pathway. In Petrotoga mobilis (strain DSM 10674 / SJ95), this protein is Probable transaldolase.